A 284-amino-acid polypeptide reads, in one-letter code: Tropomyosin (284 aa).

Residues Met1–Tyr284 adopt a coiled-coil conformation. Positions Thr110–Asn142 are enriched in basic and acidic residues. Residues Thr110 to Thr143 are disordered.

Belongs to the tropomyosin family.

Tropomyosin, in association with the troponin complex, plays a central role in the calcium dependent regulation of muscle contraction. The chain is Tropomyosin from Anisakis simplex (Herring worm).